The sequence spans 117 residues: Large ribosomal subunit protein bL20 (117 aa).

The protein belongs to the bacterial ribosomal protein bL20 family.

In terms of biological role, binds directly to 23S ribosomal RNA and is necessary for the in vitro assembly process of the 50S ribosomal subunit. It is not involved in the protein synthesizing functions of that subunit. In Wolinella succinogenes (strain ATCC 29543 / DSM 1740 / CCUG 13145 / JCM 31913 / LMG 7466 / NCTC 11488 / FDC 602W) (Vibrio succinogenes), this protein is Large ribosomal subunit protein bL20.